We begin with the raw amino-acid sequence, 264 residues long: Glyceraldehyde-3-phosphate dehydrogenase (264 aa).

Positions 45 and 93 each coordinate NAD(+). Residues 123–125 and Thr154 contribute to the D-glyceraldehyde 3-phosphate site; that span reads SCT. The active-site Nucleophile is the Cys124. An NAD(+)-binding site is contributed by Asn155. D-glyceraldehyde 3-phosphate is bound by residues Arg169, 182 to 183, and Arg205; that span reads TG. The segment at 245–264 is disordered; that stretch reads GILGYTEDPXVSSDXKGNSH.

It belongs to the glyceraldehyde-3-phosphate dehydrogenase family. Homotetramer.

The protein resides in the cytoplasm. It carries out the reaction D-glyceraldehyde 3-phosphate + phosphate + NAD(+) = (2R)-3-phospho-glyceroyl phosphate + NADH + H(+). It participates in carbohydrate degradation; glycolysis; pyruvate from D-glyceraldehyde 3-phosphate: step 1/5. In terms of biological role, catalyzes the oxidative phosphorylation of glyceraldehyde 3-phosphate (G3P) to 1,3-bisphosphoglycerate (BPG) using the cofactor NAD. The first reaction step involves the formation of a hemiacetal intermediate between G3P and a cysteine residue, and this hemiacetal intermediate is then oxidized to a thioester, with concomitant reduction of NAD to NADH. The reduced NADH is then exchanged with the second NAD, and the thioester is attacked by a nucleophilic inorganic phosphate to produce BPG. This Borrelia hermsii protein is Glyceraldehyde-3-phosphate dehydrogenase (gap).